The chain runs to 396 residues: Purine ribonucleoside efflux pump NepI (396 aa).

The Cytoplasmic portion of the chain corresponds to 1-21 (MSEFIAENRGADAITRPNWSA). Residues 22–42 (VFSVAFCVACLIIVEFLPVSL) form a helical membrane-spanning segment. Topologically, residues 43 to 54 (LTPMAQDLGISE) are periplasmic. Residues 55–75 (GVAGQSVTVTAFVAMFASLFI) traverse the membrane as a helical segment. Residues 76–85 (TQTIQATDRR) are Cytoplasmic-facing. A helical membrane pass occupies residues 86–106 (YVVILFAVLLTLSCLLVSFAN). Position 107 (serine 107) is a topological domain, periplasmic. A helical membrane pass occupies residues 108 to 128 (FSLLLIGRACLGLALGGFWAM). The Cytoplasmic portion of the chain corresponds to 129 to 147 (SASLTMRLVPPRTVPKALS). The helical transmembrane segment at 148–168 (VIFGAVSIALVIAAPLGSFLG) threads the bilayer. Residues 169-175 (ELIGWRN) lie on the Periplasmic side of the membrane. Residues 176–196 (VFNAAAVMGVLCIFWIIKSLP) form a helical membrane-spanning segment. The Cytoplasmic portion of the chain corresponds to 197-215 (SLPGEPSHQKQNTFRLLQR). The chain crosses the membrane as a helical span at residues 216–236 (PGVMAGMIAIFMSFAGQFAFF). At 237–255 (TYIRPVYMNLAGFGVDGLT) the chain is on the periplasmic side. A helical transmembrane segment spans residues 256–276 (LVLLSFGIASFIGTSLSSFIL). Residues 277 to 281 (KRSVK) are Cytoplasmic-facing. Residues 282–302 (LALAGAPLILAVSALVLTLWG) form a helical membrane-spanning segment. The Periplasmic segment spans residues 303–305 (SDK). A helical transmembrane segment spans residues 306–326 (IVATGVAIIWGLTFALVPVGW). Over 327-343 (STWITRSLADQAEKAGS) the chain is Cytoplasmic. A helical transmembrane segment spans residues 344 to 364 (IQVAVIQLANTCGAAIGGYAL). At 365-366 (DN) the chain is on the periplasmic side. Residues 367–387 (IGLTSPLMLSGTLMLLTALLV) form a helical membrane-spanning segment. Residues 388-396 (TAKVKMKKS) are Cytoplasmic-facing.

This sequence belongs to the major facilitator superfamily. DHA1 family. NepI (TC 2.A.1.2.26) subfamily.

Its subcellular location is the cell inner membrane. The enzyme catalyses inosine(in) + H(+)(out) = inosine(out) + H(+)(in). It catalyses the reaction guanosine(in) + H(+)(out) = guanosine(out) + H(+)(in). Involved in the efflux of purine ribonucleosides, such as inosine and guanosine. The protein is Purine ribonucleoside efflux pump NepI of Shigella flexneri.